Reading from the N-terminus, the 619-residue chain is Calnexin (619 aa).

Positions 1–21 (MVNRKWMYIFIQFLLVSSIRS) are cleaved as a signal peptide. Asp109 provides a ligand contact to Ca(2+). A disulfide bridge connects residues Cys152 and Cys186. 4 residues coordinate an alpha-D-glucoside: Tyr156, Lys158, Tyr177, and Asp184. The N-linked (GlcNAc...) asparagine glycan is linked to Asn203. Residues 268-401 (IFDETDLKPV…RLIDNPNYFE (134 aa)) form a p domain (Extended arm) region. Repeat copies occupy residues 270 to 282 (DETD…WDER), 287 to 299 (DESA…WDEN), 306 to 318 (DEAA…WNEE), 325 to 337 (DPEA…WDED), and 340 to 350 (GSWEAPLIDNP). 2 4 X approximate repeats regions span residues 270-337 (DETD…WDED) and 340-397 (GSWE…IDNP). An intrachain disulfide couples Cys352 to Cys358. 3 repeat units span residues 359 to 369 (GTWKAPTIKNP), 373 to 383 (GKWIRPKISNP), and 387 to 397 (GKWTARLIDNP). Glu417 contacts an alpha-D-glucoside. Asp428 serves as a coordination point for Ca(2+). Residues 481–501 (LWAVYILCVLLPLVAIGVFCF) form a helical membrane-spanning segment. The segment at 538–619 (GDEEDDVNQP…AKRRTARRGD (82 aa)) is disordered. A compositionally biased stretch (polar residues) spans 547–557 (PGPSGSQSNPE). A compositionally biased stretch (low complexity) spans 566–577 (EQQSANSSQSSA). Asn571 carries an N-linked (GlcNAc...) asparagine glycan. The span at 585–601 (HVVPENEPVKPTEEFAK) shows a compositional bias: basic and acidic residues. The segment covering 610 to 619 (AKRRTARRGD) has biased composition (basic residues).

It belongs to the calreticulin family. Glycosylation is important for its biological activity. As to expression, expressed ubiquitously in every blastomere of the embryo up to the gastrulation stage. Expression becomes gradually restricted to the head and tail regions at the comma stage during embryogenesis. During postembryonic development, expressed prominently in the H-shaped excretory cell, in the neurons of head (including ASK and ADL) and tail (including PHA and PHB), in the dorsal and ventral nerve cords, and in the spermatheca. Expressed in the spicules of the male tail (at protein level).

The protein localises to the endoplasmic reticulum membrane. The protein resides in the cytoplasm. It localises to the perinuclear region. Its subcellular location is the cytoplasmic vesicle. Functionally, calcium-binding protein that interacts with newly synthesized monoglucosylated glycoproteins in the endoplasmic reticulum. It may act in assisting protein assembly and/or in the retention within the ER of unassembled protein subunits. It seems to play a major role in the quality control apparatus of the ER by the retention of incorrectly folded proteins. Required for embryogenesis and larval development under heat and ER stress conditions. May be important for germ cell development. Involved in neuronal necrotic cell death. This is Calnexin (cnx-1) from Caenorhabditis elegans.